A 538-amino-acid polypeptide reads, in one-letter code: UPF0761 membrane protein PsycPRwf_0630 (538 aa).

6 helical membrane passes run 43–63, 100–120, 143–163, 183–203, 215–235, and 247–267; these read LLSI…VPAL, LTAI…TTIE, WTII…SSAV, WVQV…YWFI, IAGV…GIIM, and AFAA…LILL. Residues 427–538 form a disordered region; sequence SVFSAQDADA…IITEDDNPNK (112 aa). Over residues 482–493 the composition is skewed to low complexity; sequence PPDADIKAAAAK. Residues 503–514 are compositionally biased toward basic and acidic residues; it reads KHTETAKQEHKK.

The protein belongs to the UPF0761 family.

It localises to the cell inner membrane. In Psychrobacter sp. (strain PRwf-1), this protein is UPF0761 membrane protein PsycPRwf_0630.